The following is a 130-amino-acid chain: MSGRGKQGGKARAKAKTRSSRAGLQFPVGRVHRLLRKGNYSERVGAGAPVYLAAVLEYLTAEILELAGNAARDNKKTRIIPRHLQLAIRNDEELNKLLGRVTIAQGGVLPNIQAVLLPKKTETHHKAKGK.

The disordered stretch occupies residues 1–22 (MSGRGKQGGKARAKAKTRSSRA). Serine 2 bears the N-acetylserine mark. Phosphoserine; by RPS6KA5 is present on serine 2. The residue at position 4 (arginine 4) is a Citrulline; alternate. Residue arginine 4 is modified to Symmetric dimethylarginine; by PRMT5; alternate. 2 positions are modified to N6-(2-hydroxyisobutyryl)lysine; alternate: lysine 6 and lysine 10. An N6-(beta-hydroxybutyryl)lysine; alternate modification is found at lysine 6. Lysine 6 and lysine 10 each carry N6-acetyllysine; alternate. Basic residues predominate over residues 7-19 (QGGKARAKAKTRS). N6-lactoyllysine; alternate is present on lysine 10. At lysine 10 the chain carries N6-succinyllysine; alternate. Glycyl lysine isopeptide (Lys-Gly) (interchain with G-Cter in ubiquitin) cross-links involve residues lysine 14 and lysine 16. Lysine 37 carries the N6-(2-hydroxyisobutyryl)lysine; alternate modification. Lysine 37 is subject to N6-(beta-hydroxybutyryl)lysine; alternate. Lysine 37 bears the N6-crotonyllysine; alternate mark. N6-(2-hydroxyisobutyryl)lysine occurs at positions 75 and 76. Lysine 96 is subject to N6-(2-hydroxyisobutyryl)lysine; alternate. Lysine 96 is subject to N6-succinyllysine; alternate. Lysine 96 carries the N6-glutaryllysine; alternate modification. Glutamine 105 carries the post-translational modification N5-methylglutamine. Lysine 119 carries the post-translational modification N6-(2-hydroxyisobutyryl)lysine; alternate. Residues lysine 119 and lysine 120 each carry the N6-crotonyllysine; alternate modification. Lysine 119 and lysine 120 each carry N6-glutaryllysine; alternate. Lysine 120 carries the post-translational modification N6-(beta-hydroxybutyryl)lysine; alternate. Lysine 120 participates in a covalent cross-link: Glycyl lysine isopeptide (Lys-Gly) (interchain with G-Cter in ubiquitin); alternate. Threonine 121 is subject to Phosphothreonine; by DCAF1. Lysine 126 bears the N6-(beta-hydroxybutyryl)lysine; alternate mark. The residue at position 126 (lysine 126) is an N6-crotonyllysine; alternate. Lysine 126 carries the post-translational modification N6-glutaryllysine; alternate.

The protein belongs to the histone H2A family. In terms of assembly, the nucleosome is a histone octamer containing two molecules each of H2A, H2B, H3 and H4 assembled in one H3-H4 heterotetramer and two H2A-H2B heterodimers. The octamer wraps approximately 147 bp of DNA. Deiminated on Arg-4 in granulocytes upon calcium entry. In terms of processing, monoubiquitination of Lys-120 (H2AK119Ub) by RING1, TRIM37 and RNF2/RING2 complex gives a specific tag for epigenetic transcriptional repression and participates in X chromosome inactivation of female mammals. It is involved in the initiation of both imprinted and random X inactivation. Ubiquitinated H2A is enriched in inactive X chromosome chromatin. Ubiquitination of H2A functions downstream of methylation of 'Lys-27' of histone H3 (H3K27me). H2AK119Ub by RNF2/RING2 can also be induced by ultraviolet and may be involved in DNA repair. Following DNA double-strand breaks (DSBs), it is ubiquitinated through 'Lys-63' linkage of ubiquitin moieties by the E2 ligase UBE2N and the E3 ligases RNF8 and RNF168, leading to the recruitment of repair proteins to sites of DNA damage. Ubiquitination at Lys-14 and Lys-16 (H2AK13Ub and H2AK15Ub, respectively) in response to DNA damage is initiated by RNF168 that mediates monoubiquitination at these 2 sites, and 'Lys-63'-linked ubiquitin are then conjugated to monoubiquitin; RNF8 is able to extend 'Lys-63'-linked ubiquitin chains in vitro. Deubiquitinated by USP51 at Lys-14 and Lys-16 (H2AK13Ub and H2AK15Ub, respectively) after damaged DNA is repaired. H2AK119Ub and ionizing radiation-induced 'Lys-63'-linked ubiquitination (H2AK13Ub and H2AK15Ub) are distinct events. Post-translationally, phosphorylation on Ser-2 (H2AS1ph) is enhanced during mitosis. Phosphorylation on Ser-2 by RPS6KA5/MSK1 directly represses transcription. Acetylation of H3 inhibits Ser-2 phosphorylation by RPS6KA5/MSK1. Phosphorylation at Thr-121 (H2AT120ph) by DCAF1 is present in the regulatory region of many tumor suppresor genes and down-regulates their transcription. Symmetric dimethylation on Arg-4 by the PRDM1/PRMT5 complex may play a crucial role in the germ-cell lineage. In terms of processing, glutamine methylation at Gln-105 (H2AQ104me) by FBL is specifically dedicated to polymerase I. It is present at 35S ribosomal DNA locus and impairs binding of the FACT complex. Post-translationally, crotonylation (Kcr) is specifically present in male germ cells and marks testis-specific genes in post-meiotic cells, including X-linked genes that escape sex chromosome inactivation in haploid cells. Crotonylation marks active promoters and enhancers and confers resistance to transcriptional repressors. It is also associated with post-meiotically activated genes on autosomes. Hydroxybutyrylation of histones is induced by starvation. In terms of processing, lactylated in macrophages by EP300/P300 by using lactoyl-CoA directly derived from endogenous or exogenous lactate, leading to stimulates gene transcription.

The protein resides in the nucleus. Its subcellular location is the chromosome. Functionally, core component of nucleosome. Nucleosomes wrap and compact DNA into chromatin, limiting DNA accessibility to the cellular machineries which require DNA as a template. Histones thereby play a central role in transcription regulation, DNA repair, DNA replication and chromosomal stability. DNA accessibility is regulated via a complex set of post-translational modifications of histones, also called histone code, and nucleosome remodeling. The sequence is that of Histone H2A type 1-K from Mus musculus (Mouse).